The following is a 151-amino-acid chain: MD-2-related lipid-recognition protein (151 aa).

A signal peptide spans Met1–Ala18. Disulfide bonds link Cys27-Cys141, Cys45-Cys51, and Cys95-Cys100. Asn58 is a glycosylation site (N-linked (GlcNAc...) asparagine).

In terms of processing, N-glycosylated. Hemolymph (at protein level). Constitutively expressed mainly in fat body and also in hemocytes and secreted into hemolymph. Not detected in midgut, epidermis, or Malpighian tubule of naive larvae.

The protein localises to the secreted. Functionally, binds to lipopolysaccharide from a variety of Gram-negative bacteria and to lipid A. This chain is MD-2-related lipid-recognition protein, found in Manduca sexta (Tobacco hawkmoth).